The sequence spans 311 residues: MFYHNKSIFHPVTFFLIGIPGLEDFHMWISGPFCSVYLVALLGNATILLVIKVEQTLREPMFYFLAILSTIDLALSTTSVPRMLGIFWFDAHEINYGACVAQMFLIHAFTGMEAEVLLAMAFDRYVAVCAPLHYATILTSQVLVGISMCIVIRPVLLTLPMVYLIYRLPFCQAHIIAHSYCEHMGIAKLSCGNIRINGIYGLFVVSFFVLNLVLIGISYVYILRAVFRLPSHDAQLKALSTCGAHVGVICVFYIPSVFSFLTHRFGHQIPGYIHILVANLYLIIPPSLNPIIYGVRTKQIRERVLYVFTKK.

Over M1–M27 the chain is Extracellular. An N-linked (GlcNAc...) asparagine glycan is attached at N5. A helical membrane pass occupies residues W28–L48. At L49–T56 the chain is on the cytoplasmic side. A helical membrane pass occupies residues L57–T77. The Extracellular portion of the chain corresponds to T78–A101. C99 and C191 are oxidised to a cystine. Residues Q102 to F122 traverse the membrane as a helical segment. Topologically, residues D123–Q141 are cytoplasmic. The helical transmembrane segment at V142–V162 threads the bilayer. Residues Y163–G198 lie on the Extracellular side of the membrane. The chain crosses the membrane as a helical span at residues I199–S218. The Cytoplasmic portion of the chain corresponds to Y219–A238. Residues L239–S259 traverse the membrane as a helical segment. Residues F260–H274 lie on the Extracellular side of the membrane. A helical transmembrane segment spans residues I275 to V295. Over R296–K311 the chain is Cytoplasmic.

The protein belongs to the G-protein coupled receptor 1 family.

The protein localises to the cell membrane. Odorant receptor. This Homo sapiens (Human) protein is Olfactory receptor 52J3 (OR52J3).